We begin with the raw amino-acid sequence, 366 residues long: 3-dehydroquinate synthase (366 aa).

NAD(+)-binding positions include 75–80 (DGEQYK), 109–113 (GVIGD), 133–134 (TT), Lys146, Lys155, and 173–176 (CLST). Zn(2+) is bound by residues Glu188, His251, and His268.

This sequence belongs to the sugar phosphate cyclases superfamily. Dehydroquinate synthase family. NAD(+) serves as cofactor. Co(2+) is required as a cofactor. Requires Zn(2+) as cofactor.

The protein resides in the cytoplasm. The enzyme catalyses 7-phospho-2-dehydro-3-deoxy-D-arabino-heptonate = 3-dehydroquinate + phosphate. Its pathway is metabolic intermediate biosynthesis; chorismate biosynthesis; chorismate from D-erythrose 4-phosphate and phosphoenolpyruvate: step 2/7. Functionally, catalyzes the conversion of 3-deoxy-D-arabino-heptulosonate 7-phosphate (DAHP) to dehydroquinate (DHQ). This Vibrio parahaemolyticus serotype O3:K6 (strain RIMD 2210633) protein is 3-dehydroquinate synthase.